Reading from the N-terminus, the 78-residue chain is UPF0349 protein BH3414 (78 aa).

Belongs to the UPF0349 family.

The polypeptide is UPF0349 protein BH3414 (Halalkalibacterium halodurans (strain ATCC BAA-125 / DSM 18197 / FERM 7344 / JCM 9153 / C-125) (Bacillus halodurans)).